Consider the following 546-residue polypeptide: Arginine--tRNA ligase (546 aa).

Positions 117–127 (ANPTGPLHIGR) match the 'HIGH' region motif.

Belongs to the class-I aminoacyl-tRNA synthetase family.

The protein localises to the cytoplasm. It carries out the reaction tRNA(Arg) + L-arginine + ATP = L-arginyl-tRNA(Arg) + AMP + diphosphate. This chain is Arginine--tRNA ligase, found in Thermoplasma acidophilum (strain ATCC 25905 / DSM 1728 / JCM 9062 / NBRC 15155 / AMRC-C165).